The chain runs to 449 residues: Cortexillin-2 (449 aa).

Residues 1–231 are actin-binding; sequence MTDLHKEWEK…ILYTSLFFHA (231 aa). Calponin-homology (CH) domains follow at residues 10–119 and 128–233; these read KVQE…RKYR and KSSE…HAYR. Coiled coils occupy residues 232-364 and 408-441; these read YRAK…AEGL and QFEEQAKRLGSKVENENISLEKYLSLKEEELKSA.

It belongs to the cortexillin family. Homodimer; parallel.

It localises to the cytoplasm. It is found in the cytoskeleton. Functionally, actin-bundling protein. When linked to F-actin the actin filaments form preferentially anti-parallel bundles that associate into meshworks. Plays a major role in cytokinesis. The sequence is that of Cortexillin-2 (ctxB) from Heterostelium pallidum (strain ATCC 26659 / Pp 5 / PN500) (Cellular slime mold).